The primary structure comprises 89 residues: Large ribosomal subunit protein bL27 (89 aa).

The segment at 1–22 (MAHKKAGGSSRNGRDSAGRRLG) is disordered.

It belongs to the bacterial ribosomal protein bL27 family.

This chain is Large ribosomal subunit protein bL27, found in Sphingopyxis alaskensis (strain DSM 13593 / LMG 18877 / RB2256) (Sphingomonas alaskensis).